The sequence spans 383 residues: Arginine biosynthesis bifunctional protein ArgJ 1 (383 aa).

The segment at 1 to 25 (MTVTAPKGSTGGGCRRGSKESGQPD) is disordered. Thr146, Lys168, Thr179, Glu259, Asn378, and Ser383 together coordinate substrate. The active-site Nucleophile is the Thr179.

It belongs to the ArgJ family. In terms of assembly, heterotetramer of two alpha and two beta chains.

The protein localises to the cytoplasm. It carries out the reaction N(2)-acetyl-L-ornithine + L-glutamate = N-acetyl-L-glutamate + L-ornithine. The catalysed reaction is L-glutamate + acetyl-CoA = N-acetyl-L-glutamate + CoA + H(+). It participates in amino-acid biosynthesis; L-arginine biosynthesis; L-ornithine and N-acetyl-L-glutamate from L-glutamate and N(2)-acetyl-L-ornithine (cyclic): step 1/1. Its pathway is amino-acid biosynthesis; L-arginine biosynthesis; N(2)-acetyl-L-ornithine from L-glutamate: step 1/4. Functionally, catalyzes two activities which are involved in the cyclic version of arginine biosynthesis: the synthesis of N-acetylglutamate from glutamate and acetyl-CoA as the acetyl donor, and of ornithine by transacetylation between N(2)-acetylornithine and glutamate. This Streptomyces clavuligerus protein is Arginine biosynthesis bifunctional protein ArgJ 1.